Consider the following 110-residue polypeptide: U1-lycotoxin-Ls1dd (110 aa).

The N-terminal stretch at 1–20 (MKFVLLFGVLLVTLFSYSSA) is a signal peptide. Positions 21-44 (EMLDDFDQADEDELLSLIEKEEAR) are excised as a propeptide. Cystine bridges form between Cys-47–Cys-62, Cys-54–Cys-71, Cys-61–Cys-89, and Cys-73–Cys-87.

Belongs to the neurotoxin 19 (CSTX) family. 03 subfamily. As to expression, expressed by the venom gland.

It is found in the secreted. The sequence is that of U1-lycotoxin-Ls1dd from Lycosa singoriensis (Wolf spider).